Here is a 185-residue protein sequence, read N- to C-terminus: UPF0149 protein XF_2010 (185 aa).

This sequence belongs to the UPF0149 family.

This is UPF0149 protein XF_2010 from Xylella fastidiosa (strain 9a5c).